The primary structure comprises 132 residues: Large ribosomal subunit protein uL14 (132 aa).

It belongs to the universal ribosomal protein uL14 family. Part of the 50S ribosomal subunit. Forms a cluster with proteins L3 and L24e, part of which may contact the 16S rRNA in 2 intersubunit bridges.

Functionally, binds to 23S rRNA. Forms part of two intersubunit bridges in the 70S ribosome. The sequence is that of Large ribosomal subunit protein uL14 from Methanobrevibacter smithii (strain ATCC 35061 / DSM 861 / OCM 144 / PS).